A 203-amino-acid chain; its full sequence is ATP-dependent dethiobiotin synthetase BioD (203 aa).

11–16 (NVGKTI) contacts ATP. T15 contributes to the Mg(2+) binding site. Residue K31 is part of the active site. Substrate is bound at residue T35. ATP is bound by residues D42 and 94 to 97 (EGAG). D42 and E94 together coordinate Mg(2+).

Belongs to the dethiobiotin synthetase family. Homodimer. Mg(2+) serves as cofactor.

It is found in the cytoplasm. The enzyme catalyses (7R,8S)-7,8-diammoniononanoate + CO2 + ATP = (4R,5S)-dethiobiotin + ADP + phosphate + 3 H(+). Its pathway is cofactor biosynthesis; biotin biosynthesis; biotin from 7,8-diaminononanoate: step 1/2. Functionally, catalyzes a mechanistically unusual reaction, the ATP-dependent insertion of CO2 between the N7 and N8 nitrogen atoms of 7,8-diaminopelargonic acid (DAPA, also called 7,8-diammoniononanoate) to form a ureido ring. The protein is ATP-dependent dethiobiotin synthetase BioD of Lawsonia intracellularis (strain PHE/MN1-00).